The sequence spans 231 residues: ATP phosphoribosyltransferase (231 aa).

Belongs to the ATP phosphoribosyltransferase family. Short subfamily. As to quaternary structure, heteromultimer composed of HisG and HisZ subunits.

Its subcellular location is the cytoplasm. It carries out the reaction 1-(5-phospho-beta-D-ribosyl)-ATP + diphosphate = 5-phospho-alpha-D-ribose 1-diphosphate + ATP. It participates in amino-acid biosynthesis; L-histidine biosynthesis; L-histidine from 5-phospho-alpha-D-ribose 1-diphosphate: step 1/9. Catalyzes the condensation of ATP and 5-phosphoribose 1-diphosphate to form N'-(5'-phosphoribosyl)-ATP (PR-ATP). Has a crucial role in the pathway because the rate of histidine biosynthesis seems to be controlled primarily by regulation of HisG enzymatic activity. The sequence is that of ATP phosphoribosyltransferase from Brucella suis biovar 1 (strain 1330).